The following is a 334-amino-acid chain: Protein-methionine-sulfoxide reductase catalytic subunit MsrP (334 aa).

A signal peptide (tat-type signal) is located at residues 1–44 (MKKIRKLTEADVTAESAFFMQRRQVLKALGISAAALSLPNAAHA). Residues Asn88, 91–92 (YE), Cys146, Thr181, Asn233, Arg238, and 249–251 (GIK) each bind Mo-molybdopterin.

Belongs to the MsrP family. Heterodimer of a catalytic subunit (MsrP) and a heme-binding subunit (MsrQ). Mo-molybdopterin serves as cofactor. Post-translationally, predicted to be exported by the Tat system. The position of the signal peptide cleavage has not been experimentally proven.

The protein localises to the periplasm. It carries out the reaction L-methionyl-[protein] + a quinone + H2O = L-methionyl-(S)-S-oxide-[protein] + a quinol. The enzyme catalyses L-methionyl-[protein] + a quinone + H2O = L-methionyl-(R)-S-oxide-[protein] + a quinol. In terms of biological role, part of the MsrPQ system that repairs oxidized periplasmic proteins containing methionine sulfoxide residues (Met-O), using respiratory chain electrons. Thus protects these proteins from oxidative-stress damage caused by reactive species of oxygen and chlorine generated by the host defense mechanisms. MsrPQ is essential for the maintenance of envelope integrity under bleach stress, rescuing a wide series of structurally unrelated periplasmic proteins from methionine oxidation, including the primary periplasmic chaperone SurA and the lipoprotein Pal. The catalytic subunit MsrP is non-stereospecific, being able to reduce both (R-) and (S-) diastereoisomers of methionine sulfoxide. The protein is Protein-methionine-sulfoxide reductase catalytic subunit MsrP of Escherichia fergusonii (strain ATCC 35469 / DSM 13698 / CCUG 18766 / IAM 14443 / JCM 21226 / LMG 7866 / NBRC 102419 / NCTC 12128 / CDC 0568-73).